We begin with the raw amino-acid sequence, 520 residues long: Cholesterol side-chain cleavage enzyme, mitochondrial (520 aa).

The transit peptide at 1 to 36 directs the protein to the mitochondrion; sequence MLAKGLSLRSVLAKGCQPFLSPTWQSSVLATGGGAN. Heme is bound at residue Cys458.

It belongs to the cytochrome P450 family. As to quaternary structure, interacts with FDX1/adrenodoxin. Requires heme as cofactor.

The protein resides in the mitochondrion inner membrane. It catalyses the reaction 6 reduced [adrenodoxin] + cholesterol + 3 O2 + 6 H(+) = 4-methylpentanal + pregnenolone + 6 oxidized [adrenodoxin] + 4 H2O. It carries out the reaction 2 reduced [adrenodoxin] + cholesterol + O2 + 2 H(+) = (22R)-hydroxycholesterol + 2 oxidized [adrenodoxin] + H2O. The enzyme catalyses (22R)-hydroxycholesterol + 2 reduced [adrenodoxin] + O2 + 2 H(+) = (20R,22R)-20,22-dihydroxycholesterol + 2 oxidized [adrenodoxin] + H2O. The catalysed reaction is (20R,22R)-20,22-dihydroxycholesterol + 2 reduced [adrenodoxin] + O2 + 2 H(+) = 4-methylpentanal + pregnenolone + 2 oxidized [adrenodoxin] + 2 H2O. It functions in the pathway lipid metabolism; C21-steroid hormone metabolism. It participates in steroid metabolism; cholesterol metabolism. Its function is as follows. A cytochrome P450 monooxygenase that catalyzes the side-chain hydroxylation and cleavage of cholesterol to pregnenolone, the precursor of most steroid hormones. Catalyzes three sequential oxidation reactions of cholesterol, namely the hydroxylation at C22 followed with the hydroxylation at C20 to yield 20R,22R-hydroxycholesterol that is further cleaved between C20 and C22 to yield the C21-steroid pregnenolone and 4-methylpentanal. Mechanistically, uses molecular oxygen inserting one oxygen atom into a substrate and reducing the second into a water molecule. Two electrons are provided by NADPH via a two-protein mitochondrial transfer system comprising flavoprotein FDXR (adrenodoxin/ferredoxin reductase) and nonheme iron-sulfur protein FDX1 or FDX2 (adrenodoxin/ferredoxin). This chain is Cholesterol side-chain cleavage enzyme, mitochondrial (CYP11A1), found in Mesocricetus auratus (Golden hamster).